The following is a 278-amino-acid chain: Type II restriction enzyme NgoPII (278 aa).

It belongs to the NgoPII type II restriction endonuclease family.

It catalyses the reaction Endonucleolytic cleavage of DNA to give specific double-stranded fragments with terminal 5'-phosphates.. A P subtype restriction enzyme that recognizes the double-stranded sequence 5'-GGCC-3' and cleaves after G-2. This is Type II restriction enzyme NgoPII (ngoPIIR) from Neisseria gonorrhoeae.